A 196-amino-acid chain; its full sequence is Holliday junction branch migration complex subunit RuvA (196 aa).

The segment at 1 to 63 (MIASVRGEVI…EDSMTLYGFA (63 aa)) is domain I. Positions 64–142 (DADARDLFGT…PVTTGAGVTA (79 aa)) are domain II. The interval 143–151 (VGGHAVRGP) is flexible linker. Residues 151-196 (PVVEALVGLGFAAKQAEEACDKVLAADPDATTSSALRAALSMLGKK) are domain III.

It belongs to the RuvA family. Homotetramer. Forms an RuvA(8)-RuvB(12)-Holliday junction (HJ) complex. HJ DNA is sandwiched between 2 RuvA tetramers; dsDNA enters through RuvA and exits via RuvB. An RuvB hexamer assembles on each DNA strand where it exits the tetramer. Each RuvB hexamer is contacted by two RuvA subunits (via domain III) on 2 adjacent RuvB subunits; this complex drives branch migration. In the full resolvosome a probable DNA-RuvA(4)-RuvB(12)-RuvC(2) complex forms which resolves the HJ.

It localises to the cytoplasm. The RuvA-RuvB-RuvC complex processes Holliday junction (HJ) DNA during genetic recombination and DNA repair, while the RuvA-RuvB complex plays an important role in the rescue of blocked DNA replication forks via replication fork reversal (RFR). RuvA specifically binds to HJ cruciform DNA, conferring on it an open structure. The RuvB hexamer acts as an ATP-dependent pump, pulling dsDNA into and through the RuvAB complex. HJ branch migration allows RuvC to scan DNA until it finds its consensus sequence, where it cleaves and resolves the cruciform DNA. This is Holliday junction branch migration complex subunit RuvA from Mycobacterium sp. (strain JLS).